Consider the following 462-residue polypeptide: A-type ATP synthase subunit B (462 aa).

This sequence belongs to the ATPase alpha/beta chains family. In terms of assembly, has multiple subunits with at least A(3), B(3), C, D, E, F, H, I and proteolipid K(x).

It is found in the cell membrane. In terms of biological role, component of the A-type ATP synthase that produces ATP from ADP in the presence of a proton gradient across the membrane. The B chain is a regulatory subunit. The sequence is that of A-type ATP synthase subunit B from Methanococcus maripaludis (strain C7 / ATCC BAA-1331).